We begin with the raw amino-acid sequence, 243 residues long: 2-C-methyl-D-erythritol 4-phosphate cytidylyltransferase (243 aa).

It belongs to the IspD/TarI cytidylyltransferase family. IspD subfamily.

It carries out the reaction 2-C-methyl-D-erythritol 4-phosphate + CTP + H(+) = 4-CDP-2-C-methyl-D-erythritol + diphosphate. It participates in isoprenoid biosynthesis; isopentenyl diphosphate biosynthesis via DXP pathway; isopentenyl diphosphate from 1-deoxy-D-xylulose 5-phosphate: step 2/6. Its function is as follows. Catalyzes the formation of 4-diphosphocytidyl-2-C-methyl-D-erythritol from CTP and 2-C-methyl-D-erythritol 4-phosphate (MEP). The polypeptide is 2-C-methyl-D-erythritol 4-phosphate cytidylyltransferase (Chlorobium phaeovibrioides (strain DSM 265 / 1930) (Prosthecochloris vibrioformis (strain DSM 265))).